The following is a 158-amino-acid chain: Methylated-DNA--protein-cysteine methyltransferase (158 aa).

Residue Cys126 is the Nucleophile; methyl group acceptor of the active site.

The protein belongs to the MGMT family.

It localises to the cytoplasm. It catalyses the reaction a 6-O-methyl-2'-deoxyguanosine in DNA + L-cysteinyl-[protein] = S-methyl-L-cysteinyl-[protein] + a 2'-deoxyguanosine in DNA. The enzyme catalyses a 4-O-methyl-thymidine in DNA + L-cysteinyl-[protein] = a thymidine in DNA + S-methyl-L-cysteinyl-[protein]. Functionally, involved in the cellular defense against the biological effects of O6-methylguanine (O6-MeG) and O4-methylthymine (O4-MeT) in DNA. Repairs the methylated nucleobase in DNA by stoichiometrically transferring the methyl group to a cysteine residue in the enzyme. This is a suicide reaction: the enzyme is irreversibly inactivated. The chain is Methylated-DNA--protein-cysteine methyltransferase from Methanosarcina mazei (strain ATCC BAA-159 / DSM 3647 / Goe1 / Go1 / JCM 11833 / OCM 88) (Methanosarcina frisia).